The chain runs to 391 residues: Elongation factor Tu (391 aa).

The tr-type G domain maps to 10–201 (KPHVNIGTIG…EVDNYIPTPE (192 aa)). A G1 region spans residues 19-26 (GHVDHGKT). 19–26 (GHVDHGKT) provides a ligand contact to GTP. Thr-26 lines the Mg(2+) pocket. Residues 55-59 (GITIS) are G2. The segment at 76–79 (DCPG) is G3. GTP is bound by residues 76 to 80 (DCPGH) and 131 to 134 (NKVD). A G4 region spans residues 131–134 (NKVD). The segment at 169 to 171 (SAL) is G5.

It belongs to the TRAFAC class translation factor GTPase superfamily. Classic translation factor GTPase family. EF-Tu/EF-1A subfamily. Monomer.

Its subcellular location is the cytoplasm. The catalysed reaction is GTP + H2O = GDP + phosphate + H(+). Functionally, GTP hydrolase that promotes the GTP-dependent binding of aminoacyl-tRNA to the A-site of ribosomes during protein biosynthesis. This is Elongation factor Tu from Bartonella henselae (strain ATCC 49882 / DSM 28221 / CCUG 30454 / Houston 1) (Rochalimaea henselae).